Reading from the N-terminus, the 153-residue chain is uncharacterized protein (153 aa).

A signal peptide spans 1–19 (MKACLLLFFYFSFICQLHG).

This is an uncharacterized protein from Escherichia coli (strain K12).